The primary structure comprises 349 residues: Vacuolar protein sorting-associated protein 26 (349 aa).

Residues 299–349 (GVTKPGLPGSTNNNNNNNTSNTNNTNTPQQKVTESQNEVPEPENNSSDESD) form a disordered region. Residues 308-325 (STNNNNNNNTSNTNNTNT) show a composition bias toward low complexity. Positions 326–343 (PQQKVTESQNEVPEPENN) are enriched in polar residues.

Belongs to the VPS26 family. Component of a retromer subcomplex consisting of vps29, vps26 and vps35.

Its subcellular location is the membrane. Its function is as follows. Plays a role in vesicular protein sorting. Component of the membrane-associated retromer complex which is essential in endosome-to-Golgi retrograde transport. The vps29-vps26-vps35 subcomplex may be involved in cargo selection. This is Vacuolar protein sorting-associated protein 26 (vps26) from Dictyostelium discoideum (Social amoeba).